Consider the following 223-residue polypeptide: Deoxyribose-phosphate aldolase (223 aa).

Asp92 functions as the Proton donor/acceptor in the catalytic mechanism. The active-site Schiff-base intermediate with acetaldehyde is Lys153. Lys182 acts as the Proton donor/acceptor in catalysis.

It belongs to the DeoC/FbaB aldolase family. DeoC type 1 subfamily.

Its subcellular location is the cytoplasm. The enzyme catalyses 2-deoxy-D-ribose 5-phosphate = D-glyceraldehyde 3-phosphate + acetaldehyde. It participates in carbohydrate degradation; 2-deoxy-D-ribose 1-phosphate degradation; D-glyceraldehyde 3-phosphate and acetaldehyde from 2-deoxy-alpha-D-ribose 1-phosphate: step 2/2. Catalyzes a reversible aldol reaction between acetaldehyde and D-glyceraldehyde 3-phosphate to generate 2-deoxy-D-ribose 5-phosphate. In Mycoplasmoides gallisepticum (strain R(low / passage 15 / clone 2)) (Mycoplasma gallisepticum), this protein is Deoxyribose-phosphate aldolase.